The following is a 607-amino-acid chain: UvrABC system protein C (607 aa).

One can recognise a GIY-YIG domain in the interval 29–106; that stretch reads DKPGVYLMKD…IKKHNPKYNI (78 aa). One can recognise a UVR domain in the interval 211 to 246; sequence GAILKALEKKMKEASENLEFERAKEYRDLMEDLKKV.

Belongs to the UvrC family. As to quaternary structure, interacts with UvrB in an incision complex.

The protein resides in the cytoplasm. The UvrABC repair system catalyzes the recognition and processing of DNA lesions. UvrC both incises the 5' and 3' sides of the lesion. The N-terminal half is responsible for the 3' incision and the C-terminal half is responsible for the 5' incision. The chain is UvrABC system protein C from Desulfitobacterium hafniense (strain Y51).